The chain runs to 159 residues: Phosphopantetheine adenylyltransferase (159 aa).

Serine 8 is a binding site for substrate. ATP is bound by residues 8-9 (SF) and histidine 16. Residues lysine 40, threonine 72, and arginine 86 each contribute to the substrate site. ATP-binding positions include 87 to 89 (GLR), glutamate 97, and 122 to 128 (YSFLSSS).

The protein belongs to the bacterial CoaD family. In terms of assembly, homohexamer. Mg(2+) serves as cofactor.

It localises to the cytoplasm. It carries out the reaction (R)-4'-phosphopantetheine + ATP + H(+) = 3'-dephospho-CoA + diphosphate. Its pathway is cofactor biosynthesis; coenzyme A biosynthesis; CoA from (R)-pantothenate: step 4/5. Functionally, reversibly transfers an adenylyl group from ATP to 4'-phosphopantetheine, yielding dephospho-CoA (dPCoA) and pyrophosphate. The polypeptide is Phosphopantetheine adenylyltransferase (Synechocystis sp. (strain ATCC 27184 / PCC 6803 / Kazusa)).